Reading from the N-terminus, the 807-residue chain is Anaphase-promoting complex subunit 4 (807 aa).

Tyr469 bears the Phosphotyrosine mark. The disordered stretch occupies residues 755–788 (DESSDDEEEAGGKPVKIKEEVLSESETEAHQDAA). Residues Ser757 and Ser758 each carry the phosphoserine modification. Residues 770-785 (KIKEEVLSESETEAHQ) are compositionally biased toward basic and acidic residues. Lys772 participates in a covalent cross-link: Glycyl lysine isopeptide (Lys-Gly) (interchain with G-Cter in SUMO2). Phosphoserine is present on residues Ser777 and Ser779. Lys797 participates in a covalent cross-link: Glycyl lysine isopeptide (Lys-Gly) (interchain with G-Cter in SUMO2).

Belongs to the APC4 family. In terms of assembly, the mammalian APC/C is composed at least of 14 distinct subunits ANAPC1, ANAPC2, CDC27/APC3, ANAPC4, ANAPC5, CDC16/APC6, ANAPC7, CDC23/APC8, ANAPC10, ANAPC11, CDC26/APC12, ANAPC13, ANAPC15 and ANAPC16 that assemble into a complex of at least 19 chains with a combined molecular mass of around 1.2 MDa; APC/C interacts with FZR1 and FBXO5. In the context of the APC/C complex, directly interacts with UBE2S. Interacts with FBXO43.

It localises to the nucleus. It functions in the pathway protein modification; protein ubiquitination. In terms of biological role, component of the anaphase promoting complex/cyclosome (APC/C), a cell cycle-regulated E3 ubiquitin ligase that controls progression through mitosis and the G1 phase of the cell cycle. The APC/C complex acts by mediating ubiquitination and subsequent degradation of target proteins: it mainly mediates the formation of 'Lys-11'-linked polyubiquitin chains and, to a lower extent, the formation of 'Lys-48'- and 'Lys-63'-linked polyubiquitin chains. The APC/C complex catalyzes assembly of branched 'Lys-11'-/'Lys-48'-linked branched ubiquitin chains on target proteins. This Mus musculus (Mouse) protein is Anaphase-promoting complex subunit 4 (Anapc4).